Consider the following 192-residue polypeptide: Small ribosomal subunit protein uS4B (192 aa).

The region spanning 83–145 (RRLDNLVYRL…SRKIQTYASN (63 aa)) is the S4 RNA-binding domain.

It belongs to the universal ribosomal protein uS4 family. In terms of assembly, part of the 30S ribosomal subunit. Contacts protein S5. The interaction surface between S4 and S5 is involved in control of translational fidelity.

Its function is as follows. One of the primary rRNA binding proteins, it binds directly to 16S rRNA where it nucleates assembly of the body of the 30S subunit. In terms of biological role, with S5 and S12 plays an important role in translational accuracy. This is Small ribosomal subunit protein uS4B (rpsD2) from Clostridium acetobutylicum (strain ATCC 824 / DSM 792 / JCM 1419 / IAM 19013 / LMG 5710 / NBRC 13948 / NRRL B-527 / VKM B-1787 / 2291 / W).